The following is a 296-amino-acid chain: L-fucono-1,5-lactonase (296 aa).

The protein belongs to the metallo-dependent hydrolases superfamily. As to quaternary structure, monomer. Does not require a divalent metal for activity. The purified enzyme contains Zn(2+), but the addition of chelators does not diminish the catalytic activity of the enzyme, indicating that it does not require a divalent cation for substrate turnover. serves as cofactor.

It carries out the reaction L-fucono-1,5-lactone + H2O = L-fuconate + H(+). It catalyses the reaction L-fucono-1,4-lactone + H2O = L-fuconate + H(+). The enzyme catalyses D-arabinono-1,4-lactone + H2O = D-arabinonate + H(+). The catalysed reaction is L-xylono-1,4-lactone + H2O = L-xylonate + H(+). It carries out the reaction L-galactono-1,4-lactone + H2O = L-galactonate + H(+). The protein operates within carbohydrate degradation; L-fucose degradation. In terms of biological role, L-fucono-1,5-lactonase involved in an L-fucose degradation pathway. Catalyzes the hydrolysis of L-fucono-1,5-lactone to L-fuconate. L-fucono-1,5-lactone is the best substrate, but the enzyme can also hydrolyze L-fucono-1,4-lactone, L-galactono-1,4-lactone D-arabinono-1,4-lactone and L-xylono-1,4-lactone. The polypeptide is L-fucono-1,5-lactonase (Burkholderia multivorans (strain ATCC 17616 / 249)).